Here is a 249-residue protein sequence, read N- to C-terminus: Putative [LysW]-aminoadipate/[LysW]-glutamate kinase (249 aa).

Substrate contacts are provided by Arg-64 and Asn-166.

This sequence belongs to the acetylglutamate kinase family. LysZ subfamily.

The protein localises to the cytoplasm. It catalyses the reaction [amino-group carrier protein]-C-terminal-N-(1,4-dicarboxybutan-1-yl)-L-glutamine + ATP = [amino-group carrier protein]-C-terminal-N-(1-carboxy-5-phosphooxy-5-oxopentan-1-yl)-L-glutamine + ADP. The enzyme catalyses [amino-group carrier protein]-C-terminal-gamma-(L-glutamyl)-L-glutamate + ATP = [amino-group carrier protein]-C-terminal-gamma-(5-phospho-L-glutamyl)-L-glutamate + ADP. Its pathway is amino-acid biosynthesis; L-lysine biosynthesis via AAA pathway; L-lysine from L-alpha-aminoadipate (Thermus route): step 2/5. It participates in amino-acid biosynthesis; L-arginine biosynthesis. Involved in both the arginine and lysine biosynthetic pathways. Phosphorylates the LysW-bound precursors glutamate (for arginine biosynthesis), respectively alpha-aminoadipate (for lysine biosynthesis). The chain is Putative [LysW]-aminoadipate/[LysW]-glutamate kinase from Pyrococcus horikoshii (strain ATCC 700860 / DSM 12428 / JCM 9974 / NBRC 100139 / OT-3).